Here is a 143-residue protein sequence, read N- to C-terminus: Transcriptional regulator MraZ (143 aa).

SpoVT-AbrB domains follow at residues 5–47 and 76–119; these read EYKH…SLKE and ACEC…SEEN.

Belongs to the MraZ family. As to quaternary structure, forms oligomers.

The protein localises to the cytoplasm. The protein resides in the nucleoid. The polypeptide is Transcriptional regulator MraZ (Caldicellulosiruptor saccharolyticus (strain ATCC 43494 / DSM 8903 / Tp8T 6331)).